Reading from the N-terminus, the 1236-residue chain is ABC transporter B family member 9 (1236 aa).

Residues 33–320 (MTVGTIAAAG…TSPSLNAFAA (288 aa)) form the ABC transmembrane type-1 1 domain. 6 helical membrane passes run 38-58 (IAAAGNGLTQPFMTLIFGQLI), 80-100 (FIYLAVYSCVVAFLQVSCWMV), 158-178 (QLLCTFLGGFAIAFYKGPLLA), 179-199 (GVLCSCIPLIVIAGAAMSLIM), 257-277 (ISGFGLGTMLAVIFCSYGLAV), and 288-308 (GYNGGQVINVIFAVLTGGMSL). In terms of domain architecture, ABC transporter 1 spans 355-591 (IELKDVYFRY…PEGAYSQLVR (237 aa)). 390-397 (GQSGSGKS) serves as a coordination point for ATP. An N-linked (GlcNAc...) asparagine glycan is attached at Asn542. The disordered stretch occupies residues 593-616 (QEGSKEEATESERPETSLDVERSG). The span at 594 to 616 (EGSKEEATESERPETSLDVERSG) shows a compositional bias: basic and acidic residues. N-linked (GlcNAc...) asparagine glycans are attached at residues Asn631 and Asn653. A run of 6 helical transmembrane segments spans residues 685 to 705 (VLVLGSIAAMVHGTVFPIFGL), 725 to 745 (SHFWALIYIALGLTNFVMIPV), 785 to 805 (SLVGDALALIVQNIATVTTGL), 806 to 826 (IIAFTANWILALIVLALSPFI), 902 to 922 (FSFFFLYCINCVCFVSGAGLI), and 927 to 947 (ATFGEVFKVFFALTIMAIGVS). One can recognise an ABC transmembrane type-1 2 domain in the interval 686-958 (LVLGSIAAMV…TSAMAPDSNK (273 aa)). Positions 993–1230 (IEFRHVSFRY…SGGAYASLVT (238 aa)) constitute an ABC transporter 2 domain. Position 1028–1035 (1028–1035 (GESGSGKS)) interacts with ATP. N-linked (GlcNAc...) asparagine glycosylation is found at Asn1082 and Asn1181.

It belongs to the ABC transporter superfamily. ABCB family. Multidrug resistance exporter (TC 3.A.1.201) subfamily.

It is found in the membrane. This Arabidopsis thaliana (Mouse-ear cress) protein is ABC transporter B family member 9 (ABCB9).